We begin with the raw amino-acid sequence, 113 residues long: U11-theraphotoxin-Hhn1a (113 aa).

The N-terminal stretch at 1 to 21 (MNTVRVTFLLVFVLAVSLGQA) is a signal peptide. Residues 22–74 (DKDENRMEVQEKTEQGKSYLDFAENLLLQKLEELEAKLLEEDSEESRNSRQKR) constitute a propeptide that is removed on maturation. The interval 61-83 (EEDSEESRNSRQKRCIGEGVPCD) is disordered. 3 disulfides stabilise this stretch: cysteine 75–cysteine 90, cysteine 82–cysteine 95, and cysteine 89–cysteine 110.

Belongs to the neurotoxin 14 (magi-1) family. 01 (HNTX-16) subfamily. Expressed by the venom gland.

It is found in the secreted. Its function is as follows. Probable ion channel inhibitor. The sequence is that of U11-theraphotoxin-Hhn1a from Cyriopagopus hainanus (Chinese bird spider).